The sequence spans 712 residues: Dipeptidyl-peptidase 7 (712 aa).

The signal sequence occupies residues 1 to 23 (MQMKLKSILLGAALLLGASGVAK). His89 functions as the Charge relay system in the catalytic mechanism. Residues 136 to 173 (TDKVEGQLKGITDEMERLRKAQEVCQELAKKENADENQ) are a coiled coil. Active-site charge relay system residues include Asp225 and Ser648.

The protein belongs to the peptidase S46 family.

It is found in the cell outer membrane. Its activity is regulated as follows. Is inhibited in vitro by typical serine protease inhibitors like diisopropyl fluorophosphate, Pefablock, and 3,4-dichloroisocoumarin, but not by typical cysteine class inhibitors such as E-64 or iododoacetic acid. Its function is as follows. Catalyzes the removal of dipeptides from the N-terminus of oligopeptides. Shows a broad specificity for both aliphatic and aromatic residues in the P1 position, with glycine or proline being not acceptable in this position. Most potently cleaves the synthetic substrate Met-Leu-methylcoumaryl-7-amide (Met-Leu-MCA), Leu-Arg-MCA and Lys-Ala-MCA to a lesser extent. Is likely involved in amino acid metabolism and bacterial growth of asaccharolytic P.gingivalis, that utilizes amino acids from extracellular proteinaceous nutrients as energy and carbon sources. This chain is Dipeptidyl-peptidase 7, found in Porphyromonas gingivalis (strain ATCC 33277 / DSM 20709 / CIP 103683 / JCM 12257 / NCTC 11834 / 2561).